A 127-amino-acid chain; its full sequence is MLISGSLAAIIHLFLSRQQEHDGFTQQEWMISIEQMMNECKESQAVKTAEHGSVLICTNLSGQDIRFDIYHSMIRKRVDGKGHVPILDHITAMKADIENGVVLLKIESEDQKVYQTAFPVYSYLGGG.

The transformation pili are flexible filaments, consisting mainly of the major pilin ComGC and smaller amounts of the minor pilins, including at least ComGD, ComGF and ComGG. Interacts with ComGD. Interacts with ComGG.

The protein resides in the cell membrane. The protein localises to the fimbrium. In terms of biological role, required for formation of the type IV-like pilus (T4P) that plays a role in transformation. Involved in transformation. Transformation pili are dynamically extended and retracted, perhaps thereby promoting DNA uptake and transformation. Required for transformation and DNA binding. The polypeptide is Competence protein ComGF (comGF) (Bacillus subtilis (strain 168)).